Consider the following 252-residue polypeptide: Probable transcriptional regulatory protein A1E_02520 (252 aa).

Belongs to the TACO1 family.

The protein localises to the cytoplasm. The polypeptide is Probable transcriptional regulatory protein A1E_02520 (Rickettsia canadensis (strain McKiel)).